Reading from the N-terminus, the 348-residue chain is Selenide, water dikinase (348 aa).

Residue U17 is part of the active site. A non-standard amino acid (selenocysteine) is located at residue U17. ATP contacts are provided by residues K20 and 48-50 (TAD). A Mg(2+)-binding site is contributed by D51. Residues D68, D91, and 138 to 140 (GHT) each bind ATP. D91 provides a ligand contact to Mg(2+). D226 contacts Mg(2+).

It belongs to the selenophosphate synthase 1 family. Class I subfamily. As to quaternary structure, homodimer. Mg(2+) is required as a cofactor.

It catalyses the reaction hydrogenselenide + ATP + H2O = selenophosphate + AMP + phosphate + 2 H(+). Its function is as follows. Synthesizes selenophosphate from selenide and ATP. The protein is Selenide, water dikinase of Clostridioides difficile (strain 630) (Peptoclostridium difficile).